The chain runs to 133 residues: Ribosome-binding factor A (133 aa).

Belongs to the RbfA family. As to quaternary structure, monomer. Binds 30S ribosomal subunits, but not 50S ribosomal subunits or 70S ribosomes.

It is found in the cytoplasm. In terms of biological role, one of several proteins that assist in the late maturation steps of the functional core of the 30S ribosomal subunit. Associates with free 30S ribosomal subunits (but not with 30S subunits that are part of 70S ribosomes or polysomes). Required for efficient processing of 16S rRNA. May interact with the 5'-terminal helix region of 16S rRNA. The polypeptide is Ribosome-binding factor A (Citrobacter koseri (strain ATCC BAA-895 / CDC 4225-83 / SGSC4696)).